Consider the following 368-residue polypeptide: UPF0284 protein Cyan7425_0342 (368 aa).

This sequence belongs to the UPF0284 family.

This Cyanothece sp. (strain PCC 7425 / ATCC 29141) protein is UPF0284 protein Cyan7425_0342.